Here is a 528-residue protein sequence, read N- to C-terminus: GMP synthase [glutamine-hydrolyzing] (528 aa).

Residues 3 to 199 (KVAIIDFGSQ…FLDIAGCQKD (197 aa)) form the Glutamine amidotransferase type-1 domain. Cys-83 functions as the Nucleophile in the catalytic mechanism. Residues His-174 and Glu-176 contribute to the active site. Positions 200 to 394 (WTVTSFIDDQ…LGISTEILMR (195 aa)) constitute a GMPS ATP-PPase domain. Residue 227-233 (SGGVDSS) coordinates ATP.

Homodimer.

It catalyses the reaction XMP + L-glutamine + ATP + H2O = GMP + L-glutamate + AMP + diphosphate + 2 H(+). It functions in the pathway purine metabolism; GMP biosynthesis; GMP from XMP (L-Gln route): step 1/1. Functionally, catalyzes the synthesis of GMP from XMP. This chain is GMP synthase [glutamine-hydrolyzing], found in Ehrlichia ruminantium (strain Welgevonden).